Here is a 273-residue protein sequence, read N- to C-terminus: Probable ribosomal RNA small subunit methyltransferase A (273 aa).

Residues N23, L25, G50, E71, D95, and N110 each coordinate S-adenosyl-L-methionine.

This sequence belongs to the class I-like SAM-binding methyltransferase superfamily. rRNA adenine N(6)-methyltransferase family. RsmA subfamily.

Its subcellular location is the cytoplasm. Its function is as follows. Specifically dimethylates two adjacent adenosines in the loop of a conserved hairpin near the 3'-end of 16S rRNA in the 30S particle. May play a critical role in biogenesis of 30S subunits. The polypeptide is Probable ribosomal RNA small subunit methyltransferase A (Thermococcus sibiricus (strain DSM 12597 / MM 739)).